The sequence spans 664 residues: DNA ligase (664 aa).

NAD(+) contacts are provided by residues aspartate 32 to aspartate 36 and serine 80 to leucine 81. Catalysis depends on lysine 122, which acts as the N6-AMP-lysine intermediate. The NAD(+) site is built by arginine 144, glutamate 178, and lysine 314. Zn(2+) contacts are provided by cysteine 407, cysteine 410, cysteine 423, and cysteine 429. The region spanning isoleucine 587 to lysine 664 is the BRCT domain.

The protein belongs to the NAD-dependent DNA ligase family. LigA subfamily. Requires Mg(2+) as cofactor. Mn(2+) is required as a cofactor.

The enzyme catalyses NAD(+) + (deoxyribonucleotide)n-3'-hydroxyl + 5'-phospho-(deoxyribonucleotide)m = (deoxyribonucleotide)n+m + AMP + beta-nicotinamide D-nucleotide.. DNA ligase that catalyzes the formation of phosphodiester linkages between 5'-phosphoryl and 3'-hydroxyl groups in double-stranded DNA using NAD as a coenzyme and as the energy source for the reaction. It is essential for DNA replication and repair of damaged DNA. The polypeptide is DNA ligase (Clostridium botulinum (strain Okra / Type B1)).